The primary structure comprises 488 residues: ATP synthase subunit beta, chloroplastic (488 aa).

Glycine 170 to threonine 177 serves as a coordination point for ATP.

This sequence belongs to the ATPase alpha/beta chains family. In terms of assembly, F-type ATPases have 2 components, CF(1) - the catalytic core - and CF(0) - the membrane proton channel. CF(1) has five subunits: alpha(3), beta(3), gamma(1), delta(1), epsilon(1). CF(0) has four main subunits: a(1), b(1), b'(1) and c(9-12).

The protein localises to the plastid. The protein resides in the chloroplast thylakoid membrane. It catalyses the reaction ATP + H2O + 4 H(+)(in) = ADP + phosphate + 5 H(+)(out). In terms of biological role, produces ATP from ADP in the presence of a proton gradient across the membrane. The catalytic sites are hosted primarily by the beta subunits. This is ATP synthase subunit beta, chloroplastic from Picea abies (Norway spruce).